The primary structure comprises 95 residues: Small ribosomal subunit protein uS19 (95 aa).

It belongs to the universal ribosomal protein uS19 family.

Protein S19 forms a complex with S13 that binds strongly to the 16S ribosomal RNA. The sequence is that of Small ribosomal subunit protein uS19 from Syntrophobacter fumaroxidans (strain DSM 10017 / MPOB).